The chain runs to 766 residues: Single-minded homolog 1 (766 aa).

A bHLH domain is found at 1–53 (MKEKSKNAARTRREKENSEFYELAKLLPLPSAITSQLDKASIIRLTTSYLKMR). 2 PAS domains span residues 77-147 (GREL…QPYH) and 218-288 (PPSA…LVKG). Positions 292–335 (TKYYRFLAKHGGWVWVQSYATIVHNSRSSRPHCIVSVNYVLTDT) constitute a PAC domain. The Single-minded C-terminal domain maps to 336–766 (EYKGLQLSLD…GTSVIITNGS (431 aa)). Polar residues predominate over residues 353–365 (AFSYTSSSTPTMT). Disordered stretches follow at residues 353–431 (AFSY…SQHD), 528–563 (WDED…EPSK), and 642–662 (SPRE…SSPN). The Nuclear localization signal signature appears at 368–387 (RKGAKSRLSSSKSKSRTSPY). Low complexity predominate over residues 373–385 (SRLSSSKSKSRTS). The segment covering 394 to 404 (HTERSESDHDS) has biased composition (basic and acidic residues). The span at 649-662 (DNSPTALSRISSPN) shows a compositional bias: polar residues.

In terms of assembly, efficient DNA binding requires dimerization with another bHLH protein. Heterodimer; forms a heterodimer with ARNT, ARNT2.

Its subcellular location is the nucleus. In terms of biological role, transcriptional factor that may have pleiotropic effects during embryogenesis and in the adult. The chain is Single-minded homolog 1 (SIM1) from Pan troglodytes (Chimpanzee).